The sequence spans 226 residues: Ribonuclease 3 (226 aa).

Positions 7 to 129 (DARLQQALGY…LFGAVFLDAG (123 aa)) constitute an RNase III domain. E42 is a Mg(2+) binding site. Residue D46 is part of the active site. Mg(2+) contacts are provided by D115 and E118. Residue E118 is part of the active site. One can recognise a DRBM domain in the interval 156–226 (DPKTRLQEIL…ARQACAELQR (71 aa)).

It belongs to the ribonuclease III family. Homodimer. Requires Mg(2+) as cofactor.

It is found in the cytoplasm. The catalysed reaction is Endonucleolytic cleavage to 5'-phosphomonoester.. Functionally, digests double-stranded RNA. Involved in the processing of primary rRNA transcript to yield the immediate precursors to the large and small rRNAs (23S and 16S). Processes some mRNAs, and tRNAs when they are encoded in the rRNA operon. Processes pre-crRNA and tracrRNA of type II CRISPR loci if present in the organism. The sequence is that of Ribonuclease 3 from Thiobacillus denitrificans (strain ATCC 25259 / T1).